The following is a 140-amino-acid chain: Phosphoribosyl-AMP cyclohydrolase (140 aa).

Residue D78 coordinates Mg(2+). Residue C79 coordinates Zn(2+). The Mg(2+) site is built by D80 and D82. The Zn(2+) site is built by C96 and C103.

The protein belongs to the PRA-CH family. In terms of assembly, homodimer. Mg(2+) serves as cofactor. It depends on Zn(2+) as a cofactor.

It is found in the cytoplasm. The catalysed reaction is 1-(5-phospho-beta-D-ribosyl)-5'-AMP + H2O = 1-(5-phospho-beta-D-ribosyl)-5-[(5-phospho-beta-D-ribosylamino)methylideneamino]imidazole-4-carboxamide. It functions in the pathway amino-acid biosynthesis; L-histidine biosynthesis; L-histidine from 5-phospho-alpha-D-ribose 1-diphosphate: step 3/9. Catalyzes the hydrolysis of the adenine ring of phosphoribosyl-AMP. In Ralstonia pickettii (strain 12J), this protein is Phosphoribosyl-AMP cyclohydrolase.